The primary structure comprises 225 residues: Uracil-DNA glycosylase (225 aa).

The Proton acceptor role is filled by Asp65.

The protein belongs to the uracil-DNA glycosylase (UDG) superfamily. UNG family.

The protein resides in the cytoplasm. The catalysed reaction is Hydrolyzes single-stranded DNA or mismatched double-stranded DNA and polynucleotides, releasing free uracil.. Its function is as follows. Excises uracil residues from the DNA which can arise as a result of misincorporation of dUMP residues by DNA polymerase or due to deamination of cytosine. The sequence is that of Uracil-DNA glycosylase from Bacillus licheniformis (strain ATCC 14580 / DSM 13 / JCM 2505 / CCUG 7422 / NBRC 12200 / NCIMB 9375 / NCTC 10341 / NRRL NRS-1264 / Gibson 46).